The primary structure comprises 398 residues: 8-amino-7-oxononanoate synthase (398 aa).

Residue Arg23 participates in substrate binding. Residue 110–111 (GY) coordinates pyridoxal 5'-phosphate. Position 135 (His135) interacts with substrate. Pyridoxal 5'-phosphate contacts are provided by Ser181, His209, and Thr237. The residue at position 240 (Lys240) is an N6-(pyridoxal phosphate)lysine. Thr354 lines the substrate pocket.

Belongs to the class-II pyridoxal-phosphate-dependent aminotransferase family. BioF subfamily. Homodimer. Pyridoxal 5'-phosphate serves as cofactor.

The catalysed reaction is 6-carboxyhexanoyl-[ACP] + L-alanine + H(+) = (8S)-8-amino-7-oxononanoate + holo-[ACP] + CO2. It participates in cofactor biosynthesis; biotin biosynthesis. In terms of biological role, catalyzes the decarboxylative condensation of pimeloyl-[acyl-carrier protein] and L-alanine to produce 8-amino-7-oxononanoate (AON), [acyl-carrier protein], and carbon dioxide. The sequence is that of 8-amino-7-oxononanoate synthase from Anaeromyxobacter dehalogenans (strain 2CP-1 / ATCC BAA-258).